Here is a 266-residue protein sequence, read N- to C-terminus: Ribosomal RNA small subunit methyltransferase A (266 aa).

The S-adenosyl-L-methionine site is built by asparagine 16, leucine 18, glycine 43, glutamate 64, aspartate 89, and asparagine 110.

This sequence belongs to the class I-like SAM-binding methyltransferase superfamily. rRNA adenine N(6)-methyltransferase family. RsmA subfamily.

The protein resides in the cytoplasm. The catalysed reaction is adenosine(1518)/adenosine(1519) in 16S rRNA + 4 S-adenosyl-L-methionine = N(6)-dimethyladenosine(1518)/N(6)-dimethyladenosine(1519) in 16S rRNA + 4 S-adenosyl-L-homocysteine + 4 H(+). In terms of biological role, specifically dimethylates two adjacent adenosines (A1518 and A1519) in the loop of a conserved hairpin near the 3'-end of 16S rRNA in the 30S particle. May play a critical role in biogenesis of 30S subunits. In Marinomonas sp. (strain MWYL1), this protein is Ribosomal RNA small subunit methyltransferase A.